Consider the following 880-residue polypeptide: Alanine--tRNA ligase (880 aa).

Residues H568, H572, C670, and H674 each contribute to the Zn(2+) site.

The protein belongs to the class-II aminoacyl-tRNA synthetase family. Requires Zn(2+) as cofactor.

Its subcellular location is the cytoplasm. It carries out the reaction tRNA(Ala) + L-alanine + ATP = L-alanyl-tRNA(Ala) + AMP + diphosphate. In terms of biological role, catalyzes the attachment of alanine to tRNA(Ala) in a two-step reaction: alanine is first activated by ATP to form Ala-AMP and then transferred to the acceptor end of tRNA(Ala). Also edits incorrectly charged Ser-tRNA(Ala) and Gly-tRNA(Ala) via its editing domain. The polypeptide is Alanine--tRNA ligase (Enterococcus faecalis (strain ATCC 700802 / V583)).